Reading from the N-terminus, the 266-residue chain is 3-methyl-2-oxobutanoate hydroxymethyltransferase (266 aa).

Residues aspartate 45 and aspartate 84 each coordinate Mg(2+). 3-methyl-2-oxobutanoate-binding positions include 45–46, aspartate 84, and lysine 113; that span reads DS. Glutamate 115 is a binding site for Mg(2+). Glutamate 183 (proton acceptor) is an active-site residue.

It belongs to the PanB family. As to quaternary structure, homodecamer; pentamer of dimers. Mg(2+) is required as a cofactor.

Its subcellular location is the cytoplasm. The catalysed reaction is 3-methyl-2-oxobutanoate + (6R)-5,10-methylene-5,6,7,8-tetrahydrofolate + H2O = 2-dehydropantoate + (6S)-5,6,7,8-tetrahydrofolate. It functions in the pathway cofactor biosynthesis; (R)-pantothenate biosynthesis; (R)-pantoate from 3-methyl-2-oxobutanoate: step 1/2. Its function is as follows. Catalyzes the reversible reaction in which hydroxymethyl group from 5,10-methylenetetrahydrofolate is transferred onto alpha-ketoisovalerate to form ketopantoate. The polypeptide is 3-methyl-2-oxobutanoate hydroxymethyltransferase (Coxiella burnetii (strain CbuK_Q154) (Coxiella burnetii (strain Q154))).